Here is a 205-residue protein sequence, read N- to C-terminus: Guanylate kinase (205 aa).

Residues 5–184 (GLLIVLSGPS…AVQKIKGIVE (180 aa)) form the Guanylate kinase-like domain. 12–19 (GPSGVGKG) is a binding site for ATP.

Belongs to the guanylate kinase family.

It is found in the cytoplasm. It catalyses the reaction GMP + ATP = GDP + ADP. In terms of biological role, essential for recycling GMP and indirectly, cGMP. The sequence is that of Guanylate kinase from Listeria innocua serovar 6a (strain ATCC BAA-680 / CLIP 11262).